A 411-amino-acid chain; its full sequence is Dual specificity protein phosphatase Mpk3 (411 aa).

A Rhodanese domain is found at 22–149 (DSKDLILLDC…FRQAFPEWCE (128 aa)). Residues 184–197 (DSACSSSAESSDCE) are compositionally biased toward low complexity. Positions 184 to 209 (DSACSSSAESSDCESSSHHHHHHSHH) are disordered. The Tyrosine-protein phosphatase domain maps to 214–358 (APVEIIPGLL…LLSFESQLRL (145 aa)). Cys302 functions as the Phosphocysteine intermediate in the catalytic mechanism.

This sequence belongs to the protein-tyrosine phosphatase family. Non-receptor class dual specificity subfamily. In terms of assembly, interacts (via N-terminal region) with phosphorylated rl. Ubiquitous expression in eye and wing imaginal disks. Enriched in ovary.

It is found in the cytoplasm. It catalyses the reaction O-phospho-L-tyrosyl-[protein] + H2O = L-tyrosyl-[protein] + phosphate. It carries out the reaction O-phospho-L-seryl-[protein] + H2O = L-seryl-[protein] + phosphate. The enzyme catalyses O-phospho-L-threonyl-[protein] + H2O = L-threonyl-[protein] + phosphate. Activity abolished by tyrosine phosphatase inhibitor sodium vanadate. Activated by rl. Negatively regulates the activity of members of the MAP kinase family in response to changes in the cellular environment. Has a specificity for the ERK family. Acts as a negative regulator in a variety of developmental processes including cell differentiation and proliferation controlled by the Ras/ERK pathway. Suppresses the photoreceptor cell differentiation and wing vein formation. Required for proper oogenesis and early embryogenesis. Functions autonomously in a subset of photoreceptor progenitor cells in eye imaginal disks. Also appears to be required in surrounding non-neuronal cells for ommatidial patterning and photoreceptor differentiation. Plays a role in the maintenance of epithelial integrity during tracheal development. In Drosophila melanogaster (Fruit fly), this protein is Dual specificity protein phosphatase Mpk3 (Mkp3).